The following is a 299-amino-acid chain: Serine/threonine-protein kinase 1 (299 aa).

Residues 39 to 277 form the Protein kinase domain; it reads IATKPMFEGG…FKGLVSHPWF (239 aa). Residues 45–53 and Lys-66 each bind ATP; that span reads FEGGRRNNV. Asp-153 functions as the Proton acceptor in the catalytic mechanism.

It belongs to the protein kinase superfamily. Ser/Thr protein kinase family.

The protein resides in the virion. It localises to the host cytoplasm. It carries out the reaction L-seryl-[protein] + ATP = O-phospho-L-seryl-[protein] + ADP + H(+). The enzyme catalyses L-threonyl-[protein] + ATP = O-phospho-L-threonyl-[protein] + ADP + H(+). Essential for viral replication. It may mediate the virus progression through DNA replication. This African swine fever virus (isolate Pig/Kenya/KEN-50/1950) (ASFV) protein is Serine/threonine-protein kinase 1.